Reading from the N-terminus, the 380-residue chain is Outer mitochondrial transmembrane helix translocase (380 aa).

The Mitochondrial intermembrane segment spans residues 1–18; the sequence is MLSDIPRDALLRPLTRNE. A helical membrane pass occupies residues 19–37; that stretch reads VVGMLVRLTVFGAATYYSI. Topologically, residues 38–380 are cytoplasmic; sequence KWVVDALDPT…PANLREVPLD (343 aa). 136–143 provides a ligand contact to ATP; sequence GPPGCGKT.

Belongs to the AAA ATPase family. MSP1 subfamily.

It localises to the mitochondrion outer membrane. The protein localises to the peroxisome membrane. It is found in the postsynaptic cell membrane. It catalyses the reaction [protein]-with a C-terminal TM segment(out) + ATP + H2O = [protein]-with a C-terminal TM segment(in) + ADP + phosphate + H(+). In terms of biological role, outer mitochondrial translocase required to remove mislocalized tail-anchored transmembrane proteins on mitochondria. Specifically recognizes and binds tail-anchored transmembrane proteins: acts as a dislocase that mediates the ATP-dependent extraction of mistargeted tail-anchored transmembrane proteins from the mitochondrion outer membrane. Also plays a critical role in regulating the surface expression of AMPA receptors (AMPAR), thereby regulating synaptic plasticity and learning and memory. This Danio rerio (Zebrafish) protein is Outer mitochondrial transmembrane helix translocase.